Reading from the N-terminus, the 743-residue chain is Putative cation exchanger C3A12.06c (743 aa).

Helical transmembrane passes span 13–33 (LILL…HRIS), 109–129 (FPVL…IGIS), 138–158 (LVTI…TFLA), 182–202 (IGEL…SVCL), 213–233 (FLRD…FVLH), 239–258 (IWQS…FVFF), 528–548 (LRLL…ITGG), 551–571 (LYIY…LYYY), 580–600 (FLPW…STIA), 609–629 (ALGV…FAAG), 649–669 (MAMG…IGIS), 690–710 (LSIT…YVPL), and 718–738 (VLGL…IVVE).

Belongs to the Ca(2+):cation antiporter (CaCA) (TC 2.A.19) family.

It is found in the endoplasmic reticulum membrane. Its function is as follows. Putative cation exchanger. The protein is Putative cation exchanger C3A12.06c of Schizosaccharomyces pombe (strain 972 / ATCC 24843) (Fission yeast).